We begin with the raw amino-acid sequence, 324 residues long: Glyoxylate/hydroxypyruvate reductase B (324 aa).

Residues R237 and E266 contribute to the active site. H285 functions as the Proton donor in the catalytic mechanism.

Belongs to the D-isomer specific 2-hydroxyacid dehydrogenase family. GhrB subfamily. In terms of assembly, homodimer.

It is found in the cytoplasm. The enzyme catalyses glycolate + NADP(+) = glyoxylate + NADPH + H(+). The catalysed reaction is (R)-glycerate + NAD(+) = 3-hydroxypyruvate + NADH + H(+). It carries out the reaction (R)-glycerate + NADP(+) = 3-hydroxypyruvate + NADPH + H(+). Functionally, catalyzes the NADPH-dependent reduction of glyoxylate and hydroxypyruvate into glycolate and glycerate, respectively. This chain is Glyoxylate/hydroxypyruvate reductase B, found in Escherichia coli O17:K52:H18 (strain UMN026 / ExPEC).